The following is a 505-amino-acid chain: Maturase K (505 aa).

Belongs to the intron maturase 2 family. MatK subfamily.

The protein localises to the plastid. It localises to the chloroplast. Functionally, usually encoded in the trnK tRNA gene intron. Probably assists in splicing its own and other chloroplast group II introns. The sequence is that of Maturase K from Micranthes integrifolia (Wholeleaf saxifrage).